We begin with the raw amino-acid sequence, 140 residues long: MRHARGYRRLNRTHEHRKALFANMAGSLIEHEQIKTTLPKAKELRPIVEKLITLGKRGDLHARRQAAAQLKEDKDVAKLFDVLAERYKDRQGGYVRILKAGFRYGDMAPMAIIEFVDRDVDAKGAADKARLAEEEAAAEE.

It belongs to the bacterial ribosomal protein bL17 family. In terms of assembly, part of the 50S ribosomal subunit. Contacts protein L32.

In Ruegeria pomeroyi (strain ATCC 700808 / DSM 15171 / DSS-3) (Silicibacter pomeroyi), this protein is Large ribosomal subunit protein bL17.